Here is a 72-residue protein sequence, read N- to C-terminus: Translation initiation factor IF-1 (72 aa).

The region spanning 1-72 (MAKEDVIEMQ…SKGRIVFRAR (72 aa)) is the S1-like domain.

It belongs to the IF-1 family. In terms of assembly, component of the 30S ribosomal translation pre-initiation complex which assembles on the 30S ribosome in the order IF-2 and IF-3, IF-1 and N-formylmethionyl-tRNA(fMet); mRNA recruitment can occur at any time during PIC assembly.

The protein localises to the cytoplasm. One of the essential components for the initiation of protein synthesis. Stabilizes the binding of IF-2 and IF-3 on the 30S subunit to which N-formylmethionyl-tRNA(fMet) subsequently binds. Helps modulate mRNA selection, yielding the 30S pre-initiation complex (PIC). Upon addition of the 50S ribosomal subunit IF-1, IF-2 and IF-3 are released leaving the mature 70S translation initiation complex. The protein is Translation initiation factor IF-1 of Vibrio cholerae serotype O1 (strain ATCC 39541 / Classical Ogawa 395 / O395).